Here is a 322-residue protein sequence, read N- to C-terminus: D-specific alpha-keto acid dehydrogenase (322 aa).

Residues 156-157, 229-231, and aspartate 255 contribute to the NAD(+) site; these read QI and TGR. Residue arginine 231 is part of the active site. Glutamate 260 is a catalytic residue. Histidine 292 acts as the Proton donor in catalysis. 292–295 is an NAD(+) binding site; sequence HTAY.

The protein belongs to the D-isomer specific 2-hydroxyacid dehydrogenase family.

It carries out the reaction a (2R)-2-hydroxycarboxylate + NADP(+) = a 2-oxocarboxylate + NADPH + H(+). It catalyses the reaction a (2R)-2-hydroxycarboxylate + NAD(+) = a 2-oxocarboxylate + NADH + H(+). The catalysed reaction is (R)-lactate + NADP(+) = pyruvate + NADPH + H(+). The enzyme catalyses (R)-lactate + NAD(+) = pyruvate + NADH + H(+). It carries out the reaction (2R)-hydroxybutanoate + NADP(+) = 2-oxobutanoate + NADPH + H(+). Functionally, required for high-level resistance to glycopeptide antibiotics. Catalyzes the reduction of 2-keto acids to 2-D-hydroxy acids, exhibiting highest catalytic efficiency with pyruvate and 2-oxobutanoate/alpha-ketobutyrate as substrates, producing D-lactate and (2R)-hydroxybutanoate, respectively. Together with D-alanine--D-lactate ligase VanA, gives rise to peptidoglycan precursors that terminate in the depsipeptide D-alanine-D-lactate rather than the dipeptide D-alanine-D-alanine thus preventing vancomycin binding. Shows a slight preference for NADPH over NADH as the electron donor. The chain is D-specific alpha-keto acid dehydrogenase from Enterococcus faecium (Streptococcus faecium).